The chain runs to 1405 residues: DNA-directed RNA polymerase subunit beta' (1405 aa).

Residues Cys-70, Cys-72, Cys-85, and Cys-88 each contribute to the Zn(2+) site. Asp-460, Asp-462, and Asp-464 together coordinate Mg(2+). Zn(2+) is bound by residues Cys-815, Cys-890, Cys-897, and Cys-900. A disordered region spans residues 1375–1405 (GLTDSEMETLSGKPAGAEPVAALADAGADEE).

It belongs to the RNA polymerase beta' chain family. In terms of assembly, the RNAP catalytic core consists of 2 alpha, 1 beta, 1 beta' and 1 omega subunit. When a sigma factor is associated with the core the holoenzyme is formed, which can initiate transcription. Mg(2+) is required as a cofactor. Zn(2+) serves as cofactor.

The catalysed reaction is RNA(n) + a ribonucleoside 5'-triphosphate = RNA(n+1) + diphosphate. DNA-dependent RNA polymerase catalyzes the transcription of DNA into RNA using the four ribonucleoside triphosphates as substrates. This Xanthomonas oryzae pv. oryzae (strain MAFF 311018) protein is DNA-directed RNA polymerase subunit beta'.